Here is a 37-residue protein sequence, read N- to C-terminus: Cytochrome b6-f complex subunit 7 (37 aa).

The chain crosses the membrane as a helical span at residues Ile5–Phe25.

It belongs to the PetM family. As to quaternary structure, the 4 large subunits of the cytochrome b6-f complex are cytochrome b6, subunit IV (17 kDa polypeptide, PetD), cytochrome f and the Rieske protein, while the 4 small subunits are PetG, PetL, PetM and PetN. The complex functions as a dimer.

The protein localises to the cellular thylakoid membrane. In terms of biological role, component of the cytochrome b6-f complex, which mediates electron transfer between photosystem II (PSII) and photosystem I (PSI), cyclic electron flow around PSI, and state transitions. The protein is Cytochrome b6-f complex subunit 7 of Synechococcus elongatus (strain ATCC 33912 / PCC 7942 / FACHB-805) (Anacystis nidulans R2).